The following is a 95-amino-acid chain: Aspartyl/glutamyl-tRNA(Asn/Gln) amidotransferase subunit C (95 aa).

Belongs to the GatC family. Heterotrimer of A, B and C subunits.

It catalyses the reaction L-glutamyl-tRNA(Gln) + L-glutamine + ATP + H2O = L-glutaminyl-tRNA(Gln) + L-glutamate + ADP + phosphate + H(+). It carries out the reaction L-aspartyl-tRNA(Asn) + L-glutamine + ATP + H2O = L-asparaginyl-tRNA(Asn) + L-glutamate + ADP + phosphate + 2 H(+). Allows the formation of correctly charged Asn-tRNA(Asn) or Gln-tRNA(Gln) through the transamidation of misacylated Asp-tRNA(Asn) or Glu-tRNA(Gln) in organisms which lack either or both of asparaginyl-tRNA or glutaminyl-tRNA synthetases. The reaction takes place in the presence of glutamine and ATP through an activated phospho-Asp-tRNA(Asn) or phospho-Glu-tRNA(Gln). In Campylobacter lari (strain RM2100 / D67 / ATCC BAA-1060), this protein is Aspartyl/glutamyl-tRNA(Asn/Gln) amidotransferase subunit C.